The chain runs to 236 residues: Large ribosomal subunit protein uL1 (236 aa).

The protein belongs to the universal ribosomal protein uL1 family. Part of the 50S ribosomal subunit.

Functionally, binds directly to 23S rRNA. The L1 stalk is quite mobile in the ribosome, and is involved in E site tRNA release. Its function is as follows. Protein L1 is also a translational repressor protein, it controls the translation of the L11 operon by binding to its mRNA. This is Large ribosomal subunit protein uL1 from Corynebacterium jeikeium (strain K411).